A 444-amino-acid polypeptide reads, in one-letter code: Tryptophan 5-hydroxylase 1 (444 aa).

Residues 19-94 form the ACT domain; that stretch reads TLIFSLKNEV…NVLSVTPPDN (76 aa). At Ser-58 the chain carries Phosphoserine; by PKA. The L-tryptophan site is built by Tyr-235, Arg-257, and Thr-265. His-272, His-277, and Glu-317 together coordinate Fe cation. The L-tryptophan site is built by Ser-336 and Ile-366.

Belongs to the biopterin-dependent aromatic amino acid hydroxylase family. As to quaternary structure, homotetramer. Interacts with DNAJC12. The cofactor is Fe(2+). Post-translationally, ubiquitinated, leading to its degradation by the proteasome. Ubiquitinated is triggered by phosphorylation. In terms of processing, phosphorylated; triggering degradation by the proteasome.

It carries out the reaction (6R)-L-erythro-5,6,7,8-tetrahydrobiopterin + L-tryptophan + O2 = 5-hydroxy-L-tryptophan + (4aS,6R)-4a-hydroxy-L-erythro-5,6,7,8-tetrahydrobiopterin. It functions in the pathway aromatic compound metabolism; serotonin biosynthesis; serotonin from L-tryptophan: step 1/2. Functionally, oxidizes L-tryptophan to 5-hydroxy-l-tryptophan in the rate-determining step of serotonin biosynthesis. This is Tryptophan 5-hydroxylase 1 (TPH1) from Oryctolagus cuniculus (Rabbit).